Consider the following 624-residue polypeptide: Glycosyltransferase AglD (624 aa).

Aspartate 201 is an active-site residue. A run of 8 helical transmembrane segments spans residues valine 260 to isoleucine 280, valine 285 to valine 305, leucine 381 to leucine 401, alanine 427 to leucine 447, valine 496 to leucine 518, phenylalanine 532 to glycine 552, isoleucine 556 to alanine 576, and valine 587 to valine 607.

This sequence belongs to the glycosyltransferase 2 family.

It localises to the cell membrane. It functions in the pathway cell surface structure biogenesis; S-layer biogenesis. In terms of biological role, involved in the assembly of a N-linked pentasaccharide that decorates the S-layer glycoprotein and flagellins. Catalyzes the addition of the mannose found at position 5 of the pentasaccharide to its own distinct dolichol phosphate carrier. The sequence is that of Glycosyltransferase AglD (aglD) from Haloferax volcanii (strain ATCC 29605 / DSM 3757 / JCM 8879 / NBRC 14742 / NCIMB 2012 / VKM B-1768 / DS2) (Halobacterium volcanii).